A 581-amino-acid polypeptide reads, in one-letter code: Arginine--tRNA ligase (581 aa).

A 'HIGH' region motif is present at residues 126–136 (PNLAKEMHVGH).

Belongs to the class-I aminoacyl-tRNA synthetase family. Monomer.

It is found in the cytoplasm. It carries out the reaction tRNA(Arg) + L-arginine + ATP = L-arginyl-tRNA(Arg) + AMP + diphosphate. The polypeptide is Arginine--tRNA ligase (Shewanella piezotolerans (strain WP3 / JCM 13877)).